The primary structure comprises 289 residues: Oxaloacetate decarboxylase (289 aa).

Serine 47 is a binding site for substrate. Residue aspartate 85 participates in Mg(2+) binding. The substrate site is built by arginine 156 and histidine 232.

It belongs to the isocitrate lyase/PEP mutase superfamily. Oxaloacetate decarboxylase family. Homotetramer; dimer of dimers. Mg(2+) is required as a cofactor.

The catalysed reaction is oxaloacetate + H(+) = pyruvate + CO2. Catalyzes the decarboxylation of oxaloacetate into pyruvate. Seems to play a role in maintaining cellular concentrations of bicarbonate and pyruvate. This Rhodopseudomonas palustris (strain BisB5) protein is Oxaloacetate decarboxylase.